The primary structure comprises 109 residues: Small ribosomal subunit protein uS15c (109 aa).

It belongs to the universal ribosomal protein uS15 family. In terms of assembly, part of the 30S ribosomal subunit.

It localises to the plastid. The protein resides in the chloroplast. The protein is Small ribosomal subunit protein uS15c (rps15-A) of Trachelium caeruleum (Blue throatwort).